The following is a 476-amino-acid chain: Aspartyl/glutamyl-tRNA(Asn/Gln) amidotransferase subunit B (476 aa).

Belongs to the GatB/GatE family. GatB subfamily. Heterotrimer of A, B and C subunits.

It carries out the reaction L-glutamyl-tRNA(Gln) + L-glutamine + ATP + H2O = L-glutaminyl-tRNA(Gln) + L-glutamate + ADP + phosphate + H(+). It catalyses the reaction L-aspartyl-tRNA(Asn) + L-glutamine + ATP + H2O = L-asparaginyl-tRNA(Asn) + L-glutamate + ADP + phosphate + 2 H(+). Its function is as follows. Allows the formation of correctly charged Asn-tRNA(Asn) or Gln-tRNA(Gln) through the transamidation of misacylated Asp-tRNA(Asn) or Glu-tRNA(Gln) in organisms which lack either or both of asparaginyl-tRNA or glutaminyl-tRNA synthetases. The reaction takes place in the presence of glutamine and ATP through an activated phospho-Asp-tRNA(Asn) or phospho-Glu-tRNA(Gln). The sequence is that of Aspartyl/glutamyl-tRNA(Asn/Gln) amidotransferase subunit B from Geobacillus thermodenitrificans (strain NG80-2).